A 431-amino-acid polypeptide reads, in one-letter code: Tryptophan synthase beta chain 2 (431 aa).

Residue Lys111 is modified to N6-(pyridoxal phosphate)lysine.

Belongs to the TrpB family. As to quaternary structure, tetramer of two alpha and two beta chains. Pyridoxal 5'-phosphate is required as a cofactor.

It catalyses the reaction (1S,2R)-1-C-(indol-3-yl)glycerol 3-phosphate + L-serine = D-glyceraldehyde 3-phosphate + L-tryptophan + H2O. Its pathway is amino-acid biosynthesis; L-tryptophan biosynthesis; L-tryptophan from chorismate: step 5/5. The beta subunit is responsible for the synthesis of L-tryptophan from indole and L-serine. The sequence is that of Tryptophan synthase beta chain 2 (trpB2) from Sulfurisphaera tokodaii (strain DSM 16993 / JCM 10545 / NBRC 100140 / 7) (Sulfolobus tokodaii).